The sequence spans 395 residues: Immunity-related GTPase family M protein 2 (395 aa).

The IRG-type G domain occupies 63–239 (NKIKIAVTGD…PKLRETLQKD (177 aa)). Residues 72 to 79 (DSGNGMSS), 97 to 101 (TGVVR), and 179 to 181 (KLD) contribute to the GTP site.

This sequence belongs to the TRAFAC class dynamin-like GTPase superfamily. IRG family. Ubiquitinated; polyubiquitinated in the cytosol, promoting Gbp1 recruitment to the T.gondii parasitophorous vacuole membranes.

The protein localises to the cytoplasmic vesicle membrane. The protein resides in the golgi apparatus membrane. It localises to the cytoplasm. Its subcellular location is the cytosol. The catalysed reaction is GTP + H2O = GDP + phosphate + H(+). Its function is as follows. Immunity-related GTPase that plays important roles in innate immunity and inflammatory response. Acts as a dynamin-like protein that binds to intracellular membranes and promotes remodeling and trafficking of those membranes. Required for clearance of acute protozoan and bacterial infections. Acts by participating to Tgtp1/Irgb6 and Gbp1-mediated parasite killing by promoting their accumulation on the T.gondii parasitophorous vacuole membranes. Also required for prolonged loading of ubiquitin and p62/Sqstm1 to parasitophorous vacuole membranes. Also acts as a key negative regulator of the inflammatory response by inhibiting the non-canonical inflammasome, thereby protecting against Casp11-driven septic shock during endotoxemia. The sequence is that of Immunity-related GTPase family M protein 2 from Mus musculus (Mouse).